Here is a 205-residue protein sequence, read N- to C-terminus: GTP cyclohydrolase-2 (205 aa).

49–53 (RLHSE) provides a ligand contact to GTP. The Zn(2+) site is built by C54, C65, and C67. GTP is bound by residues Q70, 92–94 (EGR), and T114. The Proton acceptor role is filled by D126. R128 (nucleophile) is an active-site residue. GTP-binding residues include T149 and K154.

Belongs to the GTP cyclohydrolase II family. It depends on Zn(2+) as a cofactor.

The enzyme catalyses GTP + 4 H2O = 2,5-diamino-6-hydroxy-4-(5-phosphoribosylamino)-pyrimidine + formate + 2 phosphate + 3 H(+). Its pathway is cofactor biosynthesis; riboflavin biosynthesis; 5-amino-6-(D-ribitylamino)uracil from GTP: step 1/4. In terms of biological role, catalyzes the conversion of GTP to 2,5-diamino-6-ribosylamino-4(3H)-pyrimidinone 5'-phosphate (DARP), formate and pyrophosphate. The protein is GTP cyclohydrolase-2 of Pseudomonas aeruginosa (strain UCBPP-PA14).